We begin with the raw amino-acid sequence, 660 residues long: Bifunctional polymyxin resistance protein ArnA (660 aa).

Residues 1-304 (MKTVVFAYHD…TLGLVQGSRL (304 aa)) are formyltransferase ArnAFT. 86–88 (HLI) provides a ligand contact to (6R)-10-formyltetrahydrofolate. The active-site Proton donor; for formyltransferase activity is the His-104. Residues Arg-114 and 136–140 (VKRAD) contribute to the (6R)-10-formyltetrahydrofolate site. A dehydrogenase ArnADH region spans residues 314–660 (RRTRVLILGV…RTVDLTDKPS (347 aa)). NAD(+)-binding positions include Asp-347 and 368–369 (DI). Residues Ala-393, Tyr-398, and 432-433 (TS) each bind UDP-alpha-D-glucuronate. Glu-434 serves as the catalytic Proton acceptor; for decarboxylase activity. UDP-alpha-D-glucuronate is bound by residues Arg-460, Asn-492, 526-535 (KLIDGGKQKR), and Tyr-613. Catalysis depends on Arg-619, which acts as the Proton donor; for decarboxylase activity.

The protein in the N-terminal section; belongs to the Fmt family. UDP-L-Ara4N formyltransferase subfamily. In the C-terminal section; belongs to the NAD(P)-dependent epimerase/dehydratase family. UDP-glucuronic acid decarboxylase subfamily. Homohexamer, formed by a dimer of trimers.

It catalyses the reaction UDP-alpha-D-glucuronate + NAD(+) = UDP-beta-L-threo-pentopyranos-4-ulose + CO2 + NADH. The catalysed reaction is UDP-4-amino-4-deoxy-beta-L-arabinose + (6R)-10-formyltetrahydrofolate = UDP-4-deoxy-4-formamido-beta-L-arabinose + (6S)-5,6,7,8-tetrahydrofolate + H(+). It functions in the pathway nucleotide-sugar biosynthesis; UDP-4-deoxy-4-formamido-beta-L-arabinose biosynthesis; UDP-4-deoxy-4-formamido-beta-L-arabinose from UDP-alpha-D-glucuronate: step 1/3. Its pathway is nucleotide-sugar biosynthesis; UDP-4-deoxy-4-formamido-beta-L-arabinose biosynthesis; UDP-4-deoxy-4-formamido-beta-L-arabinose from UDP-alpha-D-glucuronate: step 3/3. The protein operates within bacterial outer membrane biogenesis; lipopolysaccharide biosynthesis. Functionally, bifunctional enzyme that catalyzes the oxidative decarboxylation of UDP-glucuronic acid (UDP-GlcUA) to UDP-4-keto-arabinose (UDP-Ara4O) and the addition of a formyl group to UDP-4-amino-4-deoxy-L-arabinose (UDP-L-Ara4N) to form UDP-L-4-formamido-arabinose (UDP-L-Ara4FN). The modified arabinose is attached to lipid A and is required for resistance to polymyxin and cationic antimicrobial peptides. The sequence is that of Bifunctional polymyxin resistance protein ArnA from Escherichia coli O157:H7.